The chain runs to 229 residues: Urease accessory protein UreG (229 aa).

A compositionally biased stretch (basic and acidic residues) spans 1–15 (MPPHFIDGEPHDHQH). The interval 1–20 (MPPHFIDGEPHDHQHDRPRR) is disordered. 34–41 (GPVGSGKT) is a GTP binding site.

The protein belongs to the SIMIBI class G3E GTPase family. UreG subfamily. In terms of assembly, homodimer. UreD, UreF and UreG form a complex that acts as a GTP-hydrolysis-dependent molecular chaperone, activating the urease apoprotein by helping to assemble the nickel containing metallocenter of UreC. The UreE protein probably delivers the nickel.

It localises to the cytoplasm. Its function is as follows. Facilitates the functional incorporation of the urease nickel metallocenter. This process requires GTP hydrolysis, probably effectuated by UreG. This Rhodococcus jostii (strain RHA1) protein is Urease accessory protein UreG.